A 526-amino-acid chain; its full sequence is Secreted triacylglycerol lipase LIP4 (526 aa).

A signal peptide spans Met-1 to Ala-26. An N-linked (GlcNAc...) asparagine glycan is attached at Asn-186. Catalysis depends on Ser-195, which acts as the Nucleophile. N-linked (GlcNAc...) asparagine glycosylation occurs at Asn-228. Active-site residues include Asp-342 and His-376. N-linked (GlcNAc...) asparagine glycosylation is present at Asn-377. A disordered region spans residues Thr-412–Arg-526. Composition is skewed to low complexity over residues Gly-413–Pro-423 and Thr-430–Ala-457. N-linked (GlcNAc...) asparagine glycosylation occurs at Asn-462. Positions Pro-480–Ser-490 are enriched in low complexity. Residues Arg-516–Arg-526 are compositionally biased toward pro residues.

It belongs to the AB hydrolase superfamily. Lipase family. Class Lip subfamily.

The protein resides in the secreted. The catalysed reaction is a triacylglycerol + H2O = a diacylglycerol + a fatty acid + H(+). The enzyme catalyses a monoacylglycerol + H2O = glycerol + a fatty acid + H(+). It carries out the reaction a diacylglycerol + H2O = a monoacylglycerol + a fatty acid + H(+). Its function is as follows. Secreted lipase that hydrolyzes acylglycerol lipids such as triacylglycerols and consequently releases free fatty acid. Can hydrolyze 4-nitrophenyl palmitate to release 4-nitrophenol and palmitoic acid. Due to an absence of fatty acid synthase genes in Malassezia species, secretory lipases are essential for the yeast to generate free fatty acids from degradation of sebum and assimilate them as lipid sources for growth. Plays important roles not only in lipid metabolism but also in the immune response of host cells and pathogenesis. The protein is Secreted triacylglycerol lipase LIP4 of Malassezia furfur (Pityriasis versicolor infection agent).